A 348-amino-acid chain; its full sequence is Keratocan (348 aa).

The first 26 residues, 1–26 (MSRLNLTMEVLLVAFVAVFLTSQVHS), serve as a signal peptide directing secretion. Residues 40 to 69 (ACPKECNCPPNFPNAVYCDNKGLKSIPVIP) enclose the LRRNT domain. Intrachain disulfides connect Cys-41-Cys-47 and Cys-45-Cys-57. 10 LRR repeats span residues 70 to 92 (PYTW…ALRN), 93 to 118 (ATQL…ALRA), 119 to 140 (MSNL…SPLP), 141 to 163 (AKLE…VFSG), 165 to 189 (GHLT…SLKG), 190 to 213 (LNNL…LPPT), 215 to 234 (TQIF…YFKG), 235 to 260 (LPKV…VFNL), 262 to 280 (SILD…PVIS), and 281 to 303 (SGLE…DICP). Asn-92 carries an N-linked (GlcNAc...) (keratan sulfate) asparagine glycan. Asn-259 carries an N-linked (GlcNAc...) (keratan sulfate) asparagine glycan. A glycan (N-linked (GlcNAc...) asparagine) is linked at Asn-297. Residues Cys-302 and Cys-339 are joined by a disulfide bond.

It belongs to the small leucine-rich proteoglycan (SLRP) family. SLRP class II subfamily. Post-translationally, glycosylated. Contains keratan sulfate chains. Expressed in eye, where it is found in the corneal epithelial layer and to a lesser extent in the stromal layer (at protein level).

The protein resides in the secreted. Its subcellular location is the extracellular space. The protein localises to the extracellular matrix. In terms of biological role, may be important in developing and maintaining corneal transparency and for the structure of the stromal matrix. The protein is Keratocan of Danio rerio (Zebrafish).